A 327-amino-acid polypeptide reads, in one-letter code: Phenylalanine--tRNA ligase alpha subunit (327 aa).

Residue glutamate 252 coordinates Mg(2+).

It belongs to the class-II aminoacyl-tRNA synthetase family. Phe-tRNA synthetase alpha subunit type 1 subfamily. Tetramer of two alpha and two beta subunits. It depends on Mg(2+) as a cofactor.

The protein resides in the cytoplasm. It catalyses the reaction tRNA(Phe) + L-phenylalanine + ATP = L-phenylalanyl-tRNA(Phe) + AMP + diphosphate + H(+). The chain is Phenylalanine--tRNA ligase alpha subunit from Shigella boydii serotype 18 (strain CDC 3083-94 / BS512).